Here is a 143-residue protein sequence, read N- to C-terminus: Transcriptional regulator MraZ (143 aa).

SpoVT-AbrB domains lie at E5–E47 and A76–T119.

It belongs to the MraZ family. In terms of assembly, forms oligomers.

Its subcellular location is the cytoplasm. The protein resides in the nucleoid. This is Transcriptional regulator MraZ from Staphylococcus aureus (strain Mu3 / ATCC 700698).